Consider the following 223-residue polypeptide: UPF0441 protein ETA_04310 (223 aa).

Positions 166–223 (YGAATPGRTMTVPKSALAPKPATTSTVTRGGFGESVAKQNTMQRNSSSTGSANRSMGG) are disordered. Positions 202–223 (AKQNTMQRNSSSTGSANRSMGG) are enriched in polar residues.

It belongs to the UPF0441 family.

The polypeptide is UPF0441 protein ETA_04310 (Erwinia tasmaniensis (strain DSM 17950 / CFBP 7177 / CIP 109463 / NCPPB 4357 / Et1/99)).